The primary structure comprises 360 residues: Photosystem II protein D1 (360 aa).

3 helical membrane-spanning segments follow: residues 29-46, 118-133, and 142-156; these read YIGWFGVLMIPTLLTATS, HFFIGICAYMGREWEL, and WIAVAFSAPVAAATA. His118 lines the chlorophyll a pocket. Residue Tyr126 participates in pheophytin a binding. Residues Asp170 and Glu189 each contribute to the [CaMn4O5] cluster site. Residues 197–218 form a helical membrane-spanning segment; the sequence is FHMMGVAGVFGGSLFSAMHGSL. Residue His198 coordinates chlorophyll a. Residues His215 and 264–265 each bind a quinone; that span reads SF. His215 is a binding site for Fe cation. Residue His272 coordinates Fe cation. Residues 274–288 traverse the membrane as a helical segment; the sequence is FLALWPVVCICVTAL. His332, Glu333, Asp342, and Ala344 together coordinate [CaMn4O5] cluster. The propeptide occupies 345–360; that stretch reads SEVSLPVALNKVEING.

Belongs to the reaction center PufL/M/PsbA/D family. PSII is composed of 1 copy each of membrane proteins PsbA, PsbB, PsbC, PsbD, PsbE, PsbF, PsbH, PsbI, PsbJ, PsbK, PsbL, PsbM, PsbT, PsbY, PsbZ, Psb30/Ycf12, at least 3 peripheral proteins of the oxygen-evolving complex and a large number of cofactors. It forms dimeric complexes. The D1/D2 heterodimer binds P680, chlorophylls that are the primary electron donor of PSII, and subsequent electron acceptors. It shares a non-heme iron and each subunit binds pheophytin, quinone, additional chlorophylls, carotenoids and lipids. D1 provides most of the ligands for the Mn4-Ca-O5 cluster of the oxygen-evolving complex (OEC). There is also a Cl(-1) ion associated with D1 and D2, which is required for oxygen evolution. The PSII complex binds additional chlorophylls, carotenoids and specific lipids. serves as cofactor. In terms of processing, tyr-161 forms a radical intermediate that is referred to as redox-active TyrZ, YZ or Y-Z. C-terminally processed by CTPA; processing is essential to allow assembly of the oxygen-evolving complex and thus photosynthetic growth.

The protein localises to the plastid. The protein resides in the chloroplast thylakoid membrane. It catalyses the reaction 2 a plastoquinone + 4 hnu + 2 H2O = 2 a plastoquinol + O2. Functionally, photosystem II (PSII) is a light-driven water:plastoquinone oxidoreductase that uses light energy to abstract electrons from H(2)O, generating O(2) and a proton gradient subsequently used for ATP formation. It consists of a core antenna complex that captures photons, and an electron transfer chain that converts photonic excitation into a charge separation. The D1/D2 (PsbA/PsbD) reaction center heterodimer binds P680, the primary electron donor of PSII as well as several subsequent electron acceptors. This Galdieria sulphuraria (Red alga) protein is Photosystem II protein D1.